The sequence spans 297 residues: Coiled-coil domain-containing protein 159 (297 aa).

Residues 147–297 (EELELVREEV…SKSGRSFPPA (151 aa)) adopt a coiled-coil conformation. Residues 256 to 297 (LRGHKGHQCLSPPLPSWDSDSDCDQDLSQPPFSKSGRSFPPA) are disordered.

Interacts with DYNLT2. Interacts with GGNBP1. Interacts with OSBP2.

Its function is as follows. Functions during spermatid development; may participate in the centrosome reduction procedure of spermatids and is required for the formation of the connecting piece/sperm head-tail coupling apparatus (HTCA) and the correct and tight attachment of the flagellum to the nuclear envelope. This is Coiled-coil domain-containing protein 159 (CCDC159) from Homo sapiens (Human).